A 498-amino-acid chain; its full sequence is Glycerol kinase (498 aa).

An ADP-binding site is contributed by Thr-12. ATP is bound by residues Thr-12, Thr-13, and Ser-14. Thr-12 provides a ligand contact to sn-glycerol 3-phosphate. Position 16 (Arg-16) interacts with ADP. Arg-82, Glu-83, Tyr-134, and Asp-243 together coordinate sn-glycerol 3-phosphate. Positions 82, 83, 134, 243, and 244 each coordinate glycerol. Thr-265 and Gly-308 together coordinate ADP. Residues Thr-265, Gly-308, Gln-312, and Gly-409 each coordinate ATP. Gly-409 and Asn-413 together coordinate ADP.

It belongs to the FGGY kinase family. Homotetramer and homodimer (in equilibrium).

It catalyses the reaction glycerol + ATP = sn-glycerol 3-phosphate + ADP + H(+). It participates in polyol metabolism; glycerol degradation via glycerol kinase pathway; sn-glycerol 3-phosphate from glycerol: step 1/1. Activated by phosphorylation and inhibited by fructose 1,6-bisphosphate (FBP). In terms of biological role, key enzyme in the regulation of glycerol uptake and metabolism. Catalyzes the phosphorylation of glycerol to yield sn-glycerol 3-phosphate. The polypeptide is Glycerol kinase (Agathobacter rectalis (strain ATCC 33656 / DSM 3377 / JCM 17463 / KCTC 5835 / VPI 0990) (Eubacterium rectale)).